We begin with the raw amino-acid sequence, 367 residues long: Anthranilate phosphoribosyltransferase (367 aa).

Residues Gly-105, 108 to 109, Thr-113, 115 to 118, 133 to 141, and Gly-145 contribute to the 5-phospho-alpha-D-ribose 1-diphosphate site; these read GD, NIST, and KHGNRAASS. Gly-105 lines the anthranilate pocket. Ser-117 serves as a coordination point for Mg(2+). Asn-136 contacts anthranilate. Arg-191 is a binding site for anthranilate. Residues Asp-249 and Glu-250 each contribute to the Mg(2+) site.

This sequence belongs to the anthranilate phosphoribosyltransferase family. In terms of assembly, homodimer. Mg(2+) is required as a cofactor.

The catalysed reaction is N-(5-phospho-beta-D-ribosyl)anthranilate + diphosphate = 5-phospho-alpha-D-ribose 1-diphosphate + anthranilate. The protein operates within amino-acid biosynthesis; L-tryptophan biosynthesis; L-tryptophan from chorismate: step 2/5. Functionally, catalyzes the transfer of the phosphoribosyl group of 5-phosphorylribose-1-pyrophosphate (PRPP) to anthranilate to yield N-(5'-phosphoribosyl)-anthranilate (PRA). This chain is Anthranilate phosphoribosyltransferase, found in Corynebacterium jeikeium (strain K411).